Here is a 967-residue protein sequence, read N- to C-terminus: MPFTLGQRWISDTESELGLGTVVAIDARMVTLLFPACGENRLYSRHDAPITRVMFNVGDTVTSHEGWKLAIDNVVEDNGLLIYHGVRLDTEEPAQLREVFLDNKLTFNKPQDRLFAGQIDRMDRFALRYRARKFMSEQFKQAQSGLRGIRASLIPHQLYIANEVGKRHNPRVLLADEVGLGKTIEAGMIIHQQIMDGRAERVLIIVPESLQHQWLVEMLRRFNLRFSLFDDSRYSESLLDSDNPFETEQMIICSLDFVRKNKQRFEHLVEATWDMLVVDEAHHLVWSEKAPSREYQVIETLAEAIPSVLLLTATPEQLGQESHFARLRLLDPNRFHDYNEFINEQQKYRPVADAVTILLSEDDLNNEQQNSISEMISEQDIEPLLKASNTQGEERTKSRQALIHMLMDRHGTGRLLFRNTRSGVKGFPNRLLHAIKMPLPTQYQTAIKVAEIMAAKKSLEVRAKEMLYPERIYQEFEGENATWWNFDPRVEWLLGFLTANRHEKVLVICAQAATALQLEQVLREREGIRAAVFHEGMSLLERDRAAAYFASEEEGAQVLLCSEIGSEGRNFQFANQLVMFDLPFNPDLLEQRIGRLDRIGQNRDIDISVPYLEGTAQSVLLRWYHEGLDAFEHTCPTGRTIYDNEYDALVNYLAQPNELGDFDKFIVSCRKQHDEMKLKLEQGRDRLLEMHSNGGEVGVELANKIAEQDNDPDLVNFALNLFDIVGINQEDRSDSLIVLTPSDHMLVPDFPGLPQDGCTITFDREHALSREDTQFISWEHPIIRNGLDLVLSGDTGSCAVSLLKNKALPVGTLLVELIYVVEAQAPKHLHLTRFLPATPVRLLLDLKGNNLASQVEFESFNRQLNAVNRHTSSKLVNAVQNEVHHVLKASESLMEAEAKTLIEQAKQEADNALTHELSRLEALRAVNPNIRDDEVEAIENERTHILNHLDEATWRLDAIRLIVVTHQ.

Positions 163 to 333 (EVGKRHNPRV…FARLRLLDPN (171 aa)) constitute a Helicase ATP-binding domain. ATP is bound at residue 176 to 183 (DEVGLGKT). Residues 279 to 282 (DEAH) carry the DEAH box motif. In terms of domain architecture, Helicase C-terminal spans 489 to 660 (RVEWLLGFLT…NYLAQPNELG (172 aa)).

The protein belongs to the SNF2/RAD54 helicase family. RapA subfamily. As to quaternary structure, interacts with the RNAP. Has a higher affinity for the core RNAP than for the holoenzyme. Its ATPase activity is stimulated by binding to RNAP.

Functionally, transcription regulator that activates transcription by stimulating RNA polymerase (RNAP) recycling in case of stress conditions such as supercoiled DNA or high salt concentrations. Probably acts by releasing the RNAP, when it is trapped or immobilized on tightly supercoiled DNA. Does not activate transcription on linear DNA. Probably not involved in DNA repair. The chain is RNA polymerase-associated protein RapA from Proteus mirabilis (strain HI4320).